A 573-amino-acid chain; its full sequence is Putative ABC transporter ATP-binding protein LJ_1704 (573 aa).

2 ABC transporter domains span residues Ile-6–Glu-247 and Leu-303–Lys-536. ATP-binding positions include Gly-40–Ser-47 and Gly-337–Thr-344.

The protein belongs to the ABC transporter superfamily.

It is found in the cell membrane. Functionally, probably part of an ABC transporter complex. Responsible for energy coupling to the transport system. The chain is Putative ABC transporter ATP-binding protein LJ_1704 from Lactobacillus johnsonii (strain CNCM I-12250 / La1 / NCC 533).